Consider the following 266-residue polypeptide: MKLSLSSPPYADAPVVVLISGLGGSGSYWLPQLAVLEQEYQVVCYDQRGTGNNPDTLAEDYSIAQMAAELHQALVAAGIERYAVVGHALGALVGMQLALDYPASVTMLVSVNGWLRINAHTRRCFQVRERLLYSGGAQAWVEAQPLFLYPADWMAARAPRLEAEDALALAHFQGKNNLLRRLNALKRADFSHHADRIRRPVQIICASDDLLVPTACSSELHAALPDSQKMVMPYGGHACNVTDPETFNALLLNGLASLLHHREAAL.

In terms of domain architecture, AB hydrolase-1 spans 14-115; the sequence is PVVVLISGLG…TMLVSVNGWL (102 aa).

This sequence belongs to the AB hydrolase superfamily. Hydrolase RutD family.

The catalysed reaction is carbamate + 2 H(+) = NH4(+) + CO2. Its function is as follows. Involved in pyrimidine catabolism. May facilitate the hydrolysis of carbamate, a reaction that can also occur spontaneously. In Shigella flexneri serotype 5b (strain 8401), this protein is Putative carbamate hydrolase RutD.